The primary structure comprises 443 residues: Xaa-Pro dipeptidase (443 aa).

5 residues coordinate Mn(2+): Asp-246, Asp-257, His-339, Glu-384, and Glu-423.

It belongs to the peptidase M24B family. Bacterial-type prolidase subfamily. Mn(2+) serves as cofactor.

The enzyme catalyses Xaa-L-Pro dipeptide + H2O = an L-alpha-amino acid + L-proline. In terms of biological role, splits dipeptides with a prolyl residue in the C-terminal position. The sequence is that of Xaa-Pro dipeptidase from Yersinia pestis bv. Antiqua (strain Nepal516).